A 1032-amino-acid polypeptide reads, in one-letter code: Caspase recruitment domain-containing protein 10 (1032 aa).

Disordered stretches follow at residues 1–23, 253–276, and 481–553; these read MPGR…SEAE, RARG…EPDN, and EFPS…MSDI. A Phosphoserine modification is found at Ser-18. A CARD domain is found at 23–115; sequence EEDALWERIE…EHFTLLTGQE (93 aa). A coiled-coil region spans residues 138–456; it reads TEVRRLREAR…LEVQLQRAQG (319 aa). Composition is skewed to basic and acidic residues over residues 261–276 and 504–517; these read AEEK…EPDN and HNSE…KEIN.

As to quaternary structure, CARD10 and BCL10 bind to each other by CARD-CARD interaction. They both participate in a complex with MALT1, where MALT1 binds to BCL10. Interacts with TMEM43; this interaction is essential for EGFR-mediated NF-kappa-B activation. Detected in adult heart, kidney and liver; lower levels in intestine, placenta, muscle and lung. Also found in fetal lung, liver and kidney.

The protein resides in the cytoplasm. Its function is as follows. Scaffold protein that plays an important role in mediating the activation of NF-kappa-B via BCL10 or EGFR. The sequence is that of Caspase recruitment domain-containing protein 10 (CARD10) from Homo sapiens (Human).